The chain runs to 432 residues: Glutamate-1-semialdehyde 2,1-aminomutase (432 aa).

Lysine 271 carries the N6-(pyridoxal phosphate)lysine modification.

The protein belongs to the class-III pyridoxal-phosphate-dependent aminotransferase family. HemL subfamily. Homodimer. Pyridoxal 5'-phosphate serves as cofactor.

It localises to the cytoplasm. It catalyses the reaction (S)-4-amino-5-oxopentanoate = 5-aminolevulinate. The protein operates within porphyrin-containing compound metabolism; protoporphyrin-IX biosynthesis; 5-aminolevulinate from L-glutamyl-tRNA(Glu): step 2/2. It functions in the pathway porphyrin-containing compound metabolism; chlorophyll biosynthesis. The sequence is that of Glutamate-1-semialdehyde 2,1-aminomutase from Prochlorococcus marinus (strain MIT 9211).